Here is a 175-residue protein sequence, read N- to C-terminus: Phytochrome-interacting ankyrin-repeat protein 1 (175 aa).

ANK repeat units follow at residues 30–59 (RGWT…DVNA), 67–96 (KGMT…NMEA), and 102–131 (CGWT…FLPD).

As to quaternary structure, interacts with phytochrome A (PHYA), both in Pr and Pfr forms.

Its subcellular location is the cytoplasm. It localises to the nucleus. The protein resides in the mitochondrion. In Arabidopsis thaliana (Mouse-ear cress), this protein is Phytochrome-interacting ankyrin-repeat protein 1.